The sequence spans 330 residues: Exostosin-like 2 (330 aa).

The Cytoplasmic segment spans residues 1-21 (MMRGCHICKLPGRVMGIRVLR). A helical; Signal-anchor for type II membrane protein transmembrane segment spans residues 22–42 (FSLVVILVLLLVAGALTNLLP). At 43-330 (NIKEDKMLTL…FPYANHKSKM (288 aa)) the chain is on the lumenal side. Residue Q72 coordinates UDP-N-acetyl-alpha-D-galactosamine. Residue Q72 participates in UDP-N-acetyl-alpha-D-glucosamine binding. N-linked (GlcNAc...) asparagine glycosylation is present at N75. Residues R76, N101, N130, R135, D151, D152, D153, and D245 each coordinate UDP-N-acetyl-alpha-D-galactosamine. R76, N101, N130, R135, D151, D152, D153, D245, D246, and R293 together coordinate UDP-N-acetyl-alpha-D-glucosamine. A Mn(2+)-binding site is contributed by D153. Residues C244 and C296 are joined by a disulfide bond. The active site involves D246. R293 contributes to the UDP-N-acetyl-alpha-D-galactosamine binding site.

The protein belongs to the glycosyltransferase 47 family. The cofactor is Mn(2+).

Its subcellular location is the endoplasmic reticulum membrane. It carries out the reaction 3-O-(beta-D-GlcA-(1-&gt;3)-beta-D-Gal-(1-&gt;3)-beta-D-Gal-(1-&gt;4)-beta-D-Xyl)-L-seryl-[protein] + UDP-N-acetyl-alpha-D-glucosamine = 3-O-(alpha-D-GlcNAc-(1-&gt;4)-beta-D-GlcA-(1-&gt;3)-beta-D-Gal-(1-&gt;3)-beta-D-Gal-(1-&gt;4)-beta-D-Xyl)-L-seryl-[protein] + UDP + H(+). Functionally, glycosyltransferase required for the biosynthesis of heparan-sulfate and responsible for the alternating addition of beta-1-4-linked glucuronic acid (GlcA) and alpha-1-4-linked N-acetylglucosamine (GlcNAc) units to nascent heparan sulfate chains. The sequence is that of Exostosin-like 2 (Extl2) from Mus musculus (Mouse).